The sequence spans 550 residues: Carboxypeptidase Y homolog A (550 aa).

A signal peptide spans 1-18 (MKSLVLGLLVGSAIASGP). Residues 19-131 (LQHVLHAPPD…KLSQYDLRIK (113 aa)) constitute a propeptide that is removed on maturation. A disordered region spans residues 20–39 (QHVLHAPPDPEPKPEPEPQV). Cystine bridges form between Cys-185–Cys-424, Cys-319–Cys-333, Cys-343–Cys-366, Cys-350–Cys-359, and Cys-388–Cys-394. 2 N-linked (GlcNAc...) asparagine glycosylation sites follow: Asn-203 and Asn-216. Ser-272 is an active-site residue. A glycan (N-linked (GlcNAc...) asparagine) is linked at Asn-289. A glycan (N-linked (GlcNAc...) asparagine) is linked at Asn-387. Asp-463 is a catalytic residue. 2 N-linked (GlcNAc...) asparagine glycosylation sites follow: Asn-493 and Asn-514. Residue His-525 is part of the active site.

This sequence belongs to the peptidase S10 family.

It localises to the vacuole. The enzyme catalyses Release of a C-terminal amino acid with broad specificity.. Vacuolar carboxypeptidase involved in degradation of small peptides. Digests preferentially peptides containing an aliphatic or hydrophobic residue in P1' position, as well as methionine, leucine or phenylalanine in P1 position of ester substrate. The chain is Carboxypeptidase Y homolog A (CPYA) from Paracoccidioides brasiliensis (strain Pb18).